The chain runs to 187 residues: MKQKLLELILTHAYRYSEQPFTLASGKKSRHYFNCKEITLVPDRLELLCKFIVERHLDESGILKPQAFGGLTMGADPICYGISLEFRKQDKNIYPLIVRKFSKDHGTNKLVEGAVHEVKSCVIVDDVITTGGSTIQAIRSMRDSGIVVVQGVCILDRQEGGMDAILAEGVQMFPIFKKSDFGNLEHE.

Residues Arg-99, Lys-100, Lys-103, His-105, and 125-133 (DDVITTGGS) each bind 5-phospho-alpha-D-ribose 1-diphosphate. Orotate-binding residues include Thr-129 and Arg-157.

Belongs to the purine/pyrimidine phosphoribosyltransferase family. PyrE subfamily. Homodimer. Mg(2+) is required as a cofactor.

The enzyme catalyses orotidine 5'-phosphate + diphosphate = orotate + 5-phospho-alpha-D-ribose 1-diphosphate. The protein operates within pyrimidine metabolism; UMP biosynthesis via de novo pathway; UMP from orotate: step 1/2. In terms of biological role, catalyzes the transfer of a ribosyl phosphate group from 5-phosphoribose 1-diphosphate to orotate, leading to the formation of orotidine monophosphate (OMP). This chain is Orotate phosphoribosyltransferase, found in Leptospira borgpetersenii serovar Hardjo-bovis (strain L550).